We begin with the raw amino-acid sequence, 292 residues long: Rhodanese-like domain-containing protein 11, chloroplastic (292 aa).

Residues Met1 to Arg56 constitute a chloroplast transit peptide. Positions Ser101 to Gly224 constitute a Rhodanese domain. Cys184 (cysteine persulfide intermediate) is an active-site residue.

Its subcellular location is the plastid. The protein localises to the chloroplast. The chain is Rhodanese-like domain-containing protein 11, chloroplastic (STR11) from Arabidopsis thaliana (Mouse-ear cress).